The primary structure comprises 483 residues: Aspartyl/glutamyl-tRNA(Asn/Gln) amidotransferase subunit B (483 aa).

Belongs to the GatB/GatE family. GatB subfamily. Heterotrimer of A, B and C subunits.

The catalysed reaction is L-glutamyl-tRNA(Gln) + L-glutamine + ATP + H2O = L-glutaminyl-tRNA(Gln) + L-glutamate + ADP + phosphate + H(+). It carries out the reaction L-aspartyl-tRNA(Asn) + L-glutamine + ATP + H2O = L-asparaginyl-tRNA(Asn) + L-glutamate + ADP + phosphate + 2 H(+). Its function is as follows. Allows the formation of correctly charged Asn-tRNA(Asn) or Gln-tRNA(Gln) through the transamidation of misacylated Asp-tRNA(Asn) or Glu-tRNA(Gln) in organisms which lack either or both of asparaginyl-tRNA or glutaminyl-tRNA synthetases. The reaction takes place in the presence of glutamine and ATP through an activated phospho-Asp-tRNA(Asn) or phospho-Glu-tRNA(Gln). The sequence is that of Aspartyl/glutamyl-tRNA(Asn/Gln) amidotransferase subunit B from Lachnospira eligens (strain ATCC 27750 / DSM 3376 / VPI C15-48 / C15-B4) (Eubacterium eligens).